The chain runs to 199 residues: Thymidylate kinase (199 aa).

7-14 lines the ATP pocket; it reads GIDGSGKS.

Belongs to the thymidylate kinase family.

It carries out the reaction dTMP + ATP = dTDP + ADP. Its function is as follows. Phosphorylation of dTMP to form dTDP in both de novo and salvage pathways of dTTP synthesis. In Thermosipho melanesiensis (strain DSM 12029 / CIP 104789 / BI429), this protein is Thymidylate kinase.